Reading from the N-terminus, the 642-residue chain is 1-deoxy-D-xylulose-5-phosphate synthase 2 (642 aa).

Thiamine diphosphate is bound by residues His79 and 120-122; that span reads AHS. Mg(2+) is bound at residue Asp155. Thiamine diphosphate contacts are provided by residues 156–157, Asn184, Tyr293, and Glu375; that span reads GS. Residue Asn184 participates in Mg(2+) binding.

It belongs to the transketolase family. DXPS subfamily. Homodimer. Requires Mg(2+) as cofactor. Thiamine diphosphate is required as a cofactor.

The enzyme catalyses D-glyceraldehyde 3-phosphate + pyruvate + H(+) = 1-deoxy-D-xylulose 5-phosphate + CO2. It functions in the pathway metabolic intermediate biosynthesis; 1-deoxy-D-xylulose 5-phosphate biosynthesis; 1-deoxy-D-xylulose 5-phosphate from D-glyceraldehyde 3-phosphate and pyruvate: step 1/1. Functionally, catalyzes the acyloin condensation reaction between C atoms 2 and 3 of pyruvate and glyceraldehyde 3-phosphate to yield 1-deoxy-D-xylulose-5-phosphate (DXP). This chain is 1-deoxy-D-xylulose-5-phosphate synthase 2, found in Roseobacter denitrificans (strain ATCC 33942 / OCh 114) (Erythrobacter sp. (strain OCh 114)).